Reading from the N-terminus, the 619-residue chain is Protein DFG16 (619 aa).

Residue M1 is a topological domain, extracellular. Residues 2 to 22 (IIRLHFYYLLTLVYHLGLVGA) form a helical membrane-spanning segment. Residues 23 to 167 (YEKAARKRIQ…KDPFPLGMIM (145 aa)) lie on the Cytoplasmic side of the membrane. The interval 33-54 (PPDLIPGPPGHKLGDERPPHYD) is disordered. The span at 44–54 (KLGDERPPHYD) shows a compositional bias: basic and acidic residues. Residues 168 to 188 (ITFASGCICVATWMLFLVVLL) form a helical membrane-spanning segment. Residues 189-203 (LPSDNHNRRNKVVHV) are Extracellular-facing. Residues 204–224 (YVLFSAIIRTVFLNETIAVIF) traverse the membrane as a helical segment. The Cytoplasmic portion of the chain corresponds to 225–291 (DSQYHDDYQD…IPFKMKKGTH (67 aa)). Residues 292 to 312 (IIITVGCFLSLADNILFANLL) form a helical membrane-spanning segment. Residues 313 to 321 (WRKNLVVLK) lie on the Extracellular side of the membrane. A helical membrane pass occupies residues 322–342 (VFYKLIELLIYTIFISIICYF). Residues 343-378 (TWHNFAYILLPKTAEINTDGKCKTKLRILWENYHET) lie on the Cytoplasmic side of the membrane. Residues 379-399 (IPLLAYNILIFILFYFTTIFF) traverse the membrane as a helical segment. Residues 400-410 (AAFTKHVRGWT) are Extracellular-facing. Residues 411 to 431 (FNFVHLLKVLITVNVWGLIGV) traverse the membrane as a helical segment. Over 432 to 619 (LEKRELHISK…NHIYNYENSD (188 aa)) the chain is Cytoplasmic. Composition is skewed to polar residues over residues 485–504 (KSNT…SPTW) and 526–549 (KFGQ…TLSK). Disordered stretches follow at residues 485–506 (KSNT…TWKS) and 520–586 (IMKS…ADKH). The segment covering 552 to 561 (QLLRKPRRKT) has biased composition (basic residues).

Its subcellular location is the membrane. Involved in invasion during filamentous growth. This chain is Protein DFG16 (DFG16), found in Saccharomyces cerevisiae (strain ATCC 204508 / S288c) (Baker's yeast).